Here is a 188-residue protein sequence, read N- to C-terminus: MTETREPAETGGYASLEEDDEDLSPGPEHSSDSEYTLSEPDSEEEEDEEEEEEETTDDPEYDPGYKVKQRLGGGRGGPSRRAPRAAQPPAQPCQLCGRSPLGEAPPGTPPCRLCCPATAPQEAPAPEGRALGEEEEEPPRAGEGRPAGREEEEEEEEEGTYHCTECEDSFDNLGELHGHFMLHARGEV.

The disordered stretch occupies residues 1–162 (MTETREPAET…EEEEEEGTYH (162 aa)). Positions 40–61 (PDSEEEEDEEEEEEETTDDPEY) are enriched in acidic residues. Low complexity predominate over residues 84–94 (RAAQPPAQPCQ). Thr-108 carries the phosphothreonine modification. The segment covering 116 to 129 (PATAPQEAPAPEGR) has biased composition (low complexity). The segment covering 138 to 149 (PPRAGEGRPAGR) has biased composition (basic and acidic residues). The C2H2-type zinc-finger motif lies at 161–183 (YHCTECEDSFDNLGELHGHFMLH).

The polypeptide is Zinc finger protein 428 (ZNF428) (Homo sapiens (Human)).